We begin with the raw amino-acid sequence, 744 residues long: Protein pthb1 homolog (744 aa).

The segment covering 722–733 (EHSPKELPKIRE) has biased composition (basic and acidic residues). The segment at 722-744 (EHSPKELPKIREEEEEEEQQVTA) is disordered. Residues 734–744 (EEEEEEQQVTA) are compositionally biased toward acidic residues.

In terms of assembly, part of BBSome complex, that contains bbs-1, bbs-2, bbs-4, bbs-5, osm-12, bbs-8/ttc-8 and bbs-9. Interacts with bbs-1.

Functionally, component of the BBSome complex. The BBSome complex is thought to function as a coat complex required for sorting of specific membrane proteins to the primary cilia. The BBSome complex is required for ciliogenesis but is dispensable for centriolar satellite function. Required for proper BBSome complex assembly and its ciliary localization. Required for cilia biogenesis and both the assembly and movement of intraflagellar transport proteins along the ciliary axoneme. In ciliated sensory neurons, required for the sensation of nitric oxide and avoidance of NO-producing organisms like P.aeruginosa. This is Protein pthb1 homolog from Caenorhabditis elegans.